We begin with the raw amino-acid sequence, 249 residues long: Chromosome-partitioning ATPase Soj (249 aa).

ATP is bound by residues Lys-15, Gly-16, Gly-17, Val-18, Gly-19, Lys-20, Thr-21, Thr-22, Pro-207, and Asn-209. Gly-17 contributes to the ADP binding site. ADP is bound by residues Gly-19, Lys-20, Thr-21, Thr-22, Pro-207, and Asn-209. A Mg(2+)-binding site is contributed by Thr-21.

Belongs to the ParA family. As to quaternary structure, monomer in the absence of nucleotides or presence of ADP, in the presence of ATP is found in a monomer-dimer equilibrium. ATP-binding is required for DNA-binding. Probably interacts with Spo0J.

It catalyses the reaction ATP + H2O = ADP + phosphate + H(+). Its activity is regulated as follows. ATPase activity is stimulated 10-fold in the presence of Spo0J and parS DNA (a plasmid centromere-like site or plasmid DNA itself). The first 20 residues of Spo0J stimulate its ATPase activity by 8%. ATPase probably involved in chromosome partitioning. Cooperatively binds dsDNA, forming nucleoprotein filaments in a strictly ATP-dependent fashion. Can also bind ssDNA with lower affinity. The protein is Chromosome-partitioning ATPase Soj of Thermus thermophilus (strain ATCC BAA-163 / DSM 7039 / HB27).